Reading from the N-terminus, the 697-residue chain is Gametogenetin-binding protein 2 (697 aa).

Ser-360 bears the Phosphoserine mark.

Interacts with GGN. As to expression, expressed in heart, brain, placenta, lung, liver, skeletal muscle, kidney and pancreas. Expressed more abundantly in heart, pancreas and skeletal muscle.

The protein resides in the cytoplasmic vesicle. Its function is as follows. May be involved in spermatogenesis. This is Gametogenetin-binding protein 2 (GGNBP2) from Homo sapiens (Human).